We begin with the raw amino-acid sequence, 197 residues long: Glycerol-3-phosphate acyltransferase (197 aa).

5 consecutive transmembrane segments (helical) span residues 6 to 26 (LFIV…AIIV), 58 to 78 (AITL…AHYL), 82 to 102 (MLNV…PIFF), 116 to 136 (ALLA…VFVA), and 157 to 177 (FYLI…CLWI).

This sequence belongs to the PlsY family. In terms of assembly, probably interacts with PlsX.

It is found in the cell inner membrane. The catalysed reaction is an acyl phosphate + sn-glycerol 3-phosphate = a 1-acyl-sn-glycero-3-phosphate + phosphate. The protein operates within lipid metabolism; phospholipid metabolism. In terms of biological role, catalyzes the transfer of an acyl group from acyl-phosphate (acyl-PO(4)) to glycerol-3-phosphate (G3P) to form lysophosphatidic acid (LPA). This enzyme utilizes acyl-phosphate as fatty acyl donor, but not acyl-CoA or acyl-ACP. The protein is Glycerol-3-phosphate acyltransferase of Ruthia magnifica subsp. Calyptogena magnifica.